The following is a 1166-amino-acid chain: Serine/threonine-protein kinase BRI1-like 1 (1166 aa).

The N-terminal stretch at 1–21 is a signal peptide; the sequence is MKQRWLLVLILCFFTTSLVMG. Topologically, residues 22 to 776 are extracellular; the sequence is IHGKHLINDD…IHAKKQTVAT (755 aa). An N-linked (GlcNAc...) asparagine glycan is attached at N33. Residues 66 to 73 carry the Cys pair 1 motif; that stretch reads CSWRGVSC. LRR repeat units lie at residues 78 to 99, 103 to 124, 126 to 147, 152 to 173, 176 to 197, 202 to 224, 227 to 248, 252 to 274, 278 to 300, 303 to 325, 327 to 349, 352 to 375, 376 to 397, 403 to 424, 427 to 449, 451 to 473, 476 to 498, 500 to 522, 524 to 547, and 548 to 570; these read RIVG…VNLT, NLQN…SGSD, YLQV…DYVF, NLVS…APSS, SLTT…SFIS, SLKY…SFGI, NLTF…ITLP, FLET…EYWG, NLKQ…LSLL, TLVI…FTAC, WLQN…VVSK, GITY…TNCS, NLRV…GFCS, VLEK…ELGK, SLKT…IWML, NLSD…VCVK, NLET…ISRC, NMIW…IGNL, KLAI…GNCK, and SLIW…LASQ. N97 is a glycosylation site (N-linked (GlcNAc...) asparagine). Residue N157 is glycosylated (N-linked (GlcNAc...) asparagine). Residues N212, N227, N237, and N257 are each glycosylated (N-linked (GlcNAc...) asparagine). N-linked (GlcNAc...) asparagine glycosylation is found at N362 and N373. N-linked (GlcNAc...) asparagine glycosylation is found at N451 and N461. N-linked (GlcNAc...) asparagine glycosylation is found at N521, N532, N558, and N638. LRR repeat units lie at residues 664–686, 688–710, and 712–734; these read YLQV…FGGL, AIGV…LGSL, and FLSD…GQLT. N-linked (GlcNAc...) asparagine glycans are attached at residues N722 and N743. A Cys pair 2 motif is present at residues 748–755; that stretch reads CGVPLRPC. Residues 777-797 traverse the membrane as a helical segment; that stretch reads AVIAGIAFSFMCFVMLVMALY. Residues 798-1166 lie on the Cytoplasmic side of the membrane; that stretch reads RVRKVQKKEQ…LVEESRDKEP (369 aa). Residues T848 and T856 each carry the phosphothreonine modification. The 289-residue stretch at 859 to 1147 folds into the Protein kinase domain; sequence FSAETMVGSG…KADTEEDESL (289 aa). ATP-binding positions include 865 to 873 and K887; that span reads VGSGGFGEV. Phosphotyrosine is present on Y932. Catalysis depends on D987, which acts as the Proton acceptor. S1022 carries the phosphoserine modification. Position 1030 is a phosphotyrosine (Y1030). T1141 is subject to Phosphothreonine. The disordered stretch occupies residues 1142 to 1166; it reads EEDESLDEFSLKETPLVEESRDKEP.

Belongs to the protein kinase superfamily. Ser/Thr protein kinase family. Predominantly expressed in vascular tissues. From 7 day old seedlings, it is expressed in the columella cells of the root tip, in the vascular initials in the meristematic region of the root and in vascular tissues. After germination, it is expressed in the stele cell and in the early differentiation zone of the root, where the expression continues from the root to the hypocotyls and cotyledons following the midvein. In mature plants, it is expressed in the vasculature of the leaf, predominantly in the midvein, and in the vascular bundles of inflorescence stems. Localizes to procambial cells of the vascular bundles located between the differentiating xylem and the phloem.

The protein resides in the cell membrane. The enzyme catalyses L-seryl-[protein] + ATP = O-phospho-L-seryl-[protein] + ADP + H(+). It carries out the reaction L-threonyl-[protein] + ATP = O-phospho-L-threonyl-[protein] + ADP + H(+). Its function is as follows. Receptor with a serine/threonine-protein kinase activity. Regulates, in response to brassinosteroid binding, a signaling cascade involved in plant development. Binds brassinolide. May be involved in cell growth and vascular differentiation. The protein is Serine/threonine-protein kinase BRI1-like 1 (BRL1) of Arabidopsis thaliana (Mouse-ear cress).